A 113-amino-acid chain; its full sequence is Large ribosomal subunit protein bL19 (113 aa).

It belongs to the bacterial ribosomal protein bL19 family.

Its function is as follows. This protein is located at the 30S-50S ribosomal subunit interface and may play a role in the structure and function of the aminoacyl-tRNA binding site. The protein is Large ribosomal subunit protein bL19 of Mycobacterium sp. (strain JLS).